The primary structure comprises 379 residues: Sulfate adenylyltransferase (379 aa).

The protein belongs to the sulfate adenylyltransferase family.

The catalysed reaction is sulfate + ATP + H(+) = adenosine 5'-phosphosulfate + diphosphate. It functions in the pathway sulfur metabolism; hydrogen sulfide biosynthesis; sulfite from sulfate: step 1/3. The chain is Sulfate adenylyltransferase (sat) from Pyrococcus abyssi (strain GE5 / Orsay).